The primary structure comprises 125 residues: uncharacterized protein (125 aa).

This is an uncharacterized protein from Methanocaldococcus jannaschii (strain ATCC 43067 / DSM 2661 / JAL-1 / JCM 10045 / NBRC 100440) (Methanococcus jannaschii).